A 476-amino-acid chain; its full sequence is Exoglucanase-6A (476 aa).

Residues 1-16 form the signal peptide; it reads MAKFFLTAAFAAAALA. 2 disulfides stabilise this stretch: Cys-33–Cys-50 and Cys-44–Cys-60. A CBM1 domain is found at 33 to 60; the sequence is CGGIGFNGPTCCQSGSTCVKQNDWYSQC. Residues 67–94 form a disordered region; sequence TTTSTTSTSSSSTTSRATSTTRTGGVTS. Thr-144 is a glycosylation site (O-linked (Man...) threonine). Ser-153 carries O-linked (Man...) serine glycosylation. 2 residues coordinate substrate: Trp-163 and Asp-165. An N-linked (GlcNAc...) asparagine glycan is attached at Asn-167. The segment at 200-222 is substrate binding loop 1; the sequence is YDLPDRDCAAAASNGEWAIANNG. Residue Asp-252 is the Proton donor of the active site. His-297, Trp-300, Asn-336, Trp-397, Lys-425, and Glu-429 together coordinate substrate. Residues 423 to 461 form a substrate binding loop 2 region; that stretch reads WVKPGGECDGTSDTTAARYDYHCGLEDALKPAPEAGQWF. Asp-431 acts as the Proton acceptor in catalysis.

This sequence belongs to the glycosyl hydrolase 6 (cellulase A) family. As to quaternary structure, monomer.

It catalyses the reaction Hydrolysis of (1-&gt;4)-beta-D-glucosidic linkages in cellulose and cellotetraose, releasing cellobiose from the non-reducing ends of the chains.. Its function is as follows. Plays a central role in the recycling of plant biomass. The biological conversion of cellulose to glucose generally requires three types of hydrolytic enzymes: (1) Endoglucanases which cut internal beta-1,4-glucosidic bonds; (2) Exocellobiohydrolases that cut the disaccharide cellobiose from the non-reducing end of the cellulose polymer chain; (3) Beta-1,4-glucosidases which hydrolyze the cellobiose and other short cello-oligosaccharides to glucose. This Humicola insolens (Soft-rot fungus) protein is Exoglucanase-6A.